We begin with the raw amino-acid sequence, 282 residues long: 4-hydroxy-3-methylbut-2-enyl diphosphate reductase (282 aa).

Cysteine 14 is a binding site for [4Fe-4S] cluster. (2E)-4-hydroxy-3-methylbut-2-enyl diphosphate-binding residues include histidine 43 and histidine 78. 2 residues coordinate dimethylallyl diphosphate: histidine 43 and histidine 78. Isopentenyl diphosphate contacts are provided by histidine 43 and histidine 78. Cysteine 100 is a binding site for [4Fe-4S] cluster. Histidine 128 contributes to the (2E)-4-hydroxy-3-methylbut-2-enyl diphosphate binding site. Residue histidine 128 coordinates dimethylallyl diphosphate. Histidine 128 is a binding site for isopentenyl diphosphate. The Proton donor role is filled by glutamate 130. Residue threonine 164 participates in (2E)-4-hydroxy-3-methylbut-2-enyl diphosphate binding. Cysteine 192 lines the [4Fe-4S] cluster pocket. (2E)-4-hydroxy-3-methylbut-2-enyl diphosphate is bound by residues serine 220, serine 221, asparagine 222, and serine 266. Positions 220, 221, 222, and 266 each coordinate dimethylallyl diphosphate. The isopentenyl diphosphate site is built by serine 220, serine 221, asparagine 222, and serine 266.

This sequence belongs to the IspH family. Requires [4Fe-4S] cluster as cofactor.

It carries out the reaction isopentenyl diphosphate + 2 oxidized [2Fe-2S]-[ferredoxin] + H2O = (2E)-4-hydroxy-3-methylbut-2-enyl diphosphate + 2 reduced [2Fe-2S]-[ferredoxin] + 2 H(+). The catalysed reaction is dimethylallyl diphosphate + 2 oxidized [2Fe-2S]-[ferredoxin] + H2O = (2E)-4-hydroxy-3-methylbut-2-enyl diphosphate + 2 reduced [2Fe-2S]-[ferredoxin] + 2 H(+). It participates in isoprenoid biosynthesis; dimethylallyl diphosphate biosynthesis; dimethylallyl diphosphate from (2E)-4-hydroxy-3-methylbutenyl diphosphate: step 1/1. Its pathway is isoprenoid biosynthesis; isopentenyl diphosphate biosynthesis via DXP pathway; isopentenyl diphosphate from 1-deoxy-D-xylulose 5-phosphate: step 6/6. Functionally, catalyzes the conversion of 1-hydroxy-2-methyl-2-(E)-butenyl 4-diphosphate (HMBPP) into a mixture of isopentenyl diphosphate (IPP) and dimethylallyl diphosphate (DMAPP). Acts in the terminal step of the DOXP/MEP pathway for isoprenoid precursor biosynthesis. The protein is 4-hydroxy-3-methylbut-2-enyl diphosphate reductase of Clostridium perfringens (strain ATCC 13124 / DSM 756 / JCM 1290 / NCIMB 6125 / NCTC 8237 / Type A).